The primary structure comprises 1196 residues: Major DNA-binding protein (1196 aa).

Residues 499 to 512 (CNLCTFDTRHACVH) fold into a zinc finger. 2 short sequence motifs (required for filament formation) span residues 843-844 (FW) and 1142-1144 (FNF). The tract at residues 1158-1196 (GGPGAPGPAFAGRKRAFHGDDPFGEGPPDKKGDLTLDML) is disordered. The tract at residues 1170–1196 (RKRAFHGDDPFGEGPPDKKGDLTLDML) is required for nuclear localization. Residues 1174–1196 (FHGDDPFGEGPPDKKGDLTLDML) are compositionally biased toward basic and acidic residues.

The protein belongs to the herpesviridae major DNA-binding protein family. In terms of assembly, homooligomers. Forms double-helical filaments necessary for the formation of replication compartments within the host nucleus. Interacts with the origin-binding protein. Interacts with the helicase primase complex; this interaction stimulates primer synthesis activity of the helicase-primase complex. Interacts with the DNA polymerase. Interacts with the alkaline exonuclease; this interaction increases its nuclease processivity.

Its subcellular location is the host nucleus. Plays several crucial roles in viral infection. Participates in the opening of the viral DNA origin to initiate replication by interacting with the origin-binding protein. May disrupt loops, hairpins and other secondary structures present on ssDNA to reduce and eliminate pausing of viral DNA polymerase at specific sites during elongation. Promotes viral DNA recombination by performing strand-transfer, characterized by the ability to transfer a DNA strand from a linear duplex to a complementary single-stranded DNA circle. Can also catalyze the renaturation of complementary single strands. Additionally, reorganizes the host cell nucleus, leading to the formation of prereplicative sites and replication compartments. This process is driven by the protein which can form double-helical filaments in the absence of DNA. The sequence is that of Major DNA-binding protein from Homo sapiens (Human).